We begin with the raw amino-acid sequence, 313 residues long: Ribose-phosphate pyrophosphokinase (313 aa).

Residues 37–39 (DGE) and 96–97 (RQ) contribute to the ATP site. 2 residues coordinate Mg(2+): His-131 and Asp-170. Lys-193 is a catalytic residue. D-ribose 5-phosphate-binding positions include Arg-195, Asp-219, and 223-227 (DTAGT).

The protein belongs to the ribose-phosphate pyrophosphokinase family. Class I subfamily. Homohexamer. Mg(2+) is required as a cofactor.

It is found in the cytoplasm. It carries out the reaction D-ribose 5-phosphate + ATP = 5-phospho-alpha-D-ribose 1-diphosphate + AMP + H(+). It participates in metabolic intermediate biosynthesis; 5-phospho-alpha-D-ribose 1-diphosphate biosynthesis; 5-phospho-alpha-D-ribose 1-diphosphate from D-ribose 5-phosphate (route I): step 1/1. In terms of biological role, involved in the biosynthesis of the central metabolite phospho-alpha-D-ribosyl-1-pyrophosphate (PRPP) via the transfer of pyrophosphoryl group from ATP to 1-hydroxyl of ribose-5-phosphate (Rib-5-P). The protein is Ribose-phosphate pyrophosphokinase of Pseudomonas aeruginosa (strain ATCC 15692 / DSM 22644 / CIP 104116 / JCM 14847 / LMG 12228 / 1C / PRS 101 / PAO1).